We begin with the raw amino-acid sequence, 191 residues long: Hypoxanthine/guanine phosphoribosyltransferase (191 aa).

The protein belongs to the purine/pyrimidine phosphoribosyltransferase family. Archaeal HPRT subfamily. Homodimer.

The protein localises to the cytoplasm. It catalyses the reaction IMP + diphosphate = hypoxanthine + 5-phospho-alpha-D-ribose 1-diphosphate. The enzyme catalyses GMP + diphosphate = guanine + 5-phospho-alpha-D-ribose 1-diphosphate. Its pathway is purine metabolism; IMP biosynthesis via salvage pathway; IMP from hypoxanthine: step 1/1. Functionally, catalyzes a salvage reaction resulting in the formation of IMP that is energically less costly than de novo synthesis. This Methanocella paludicola (strain DSM 17711 / JCM 13418 / NBRC 101707 / SANAE) protein is Hypoxanthine/guanine phosphoribosyltransferase.